A 683-amino-acid chain; its full sequence is DNA ligase (683 aa).

NAD(+) contacts are provided by residues 35-39, 81-82, and Glu-112; these read DAEYD and SL. Lys-114 acts as the N6-AMP-lysine intermediate in catalysis. Residues Arg-135, Glu-170, Lys-277, and Lys-301 each coordinate NAD(+). Residues Cys-395, Cys-398, Cys-411, and Cys-417 each contribute to the Zn(2+) site. The 83-residue stretch at 601-683 folds into the BRCT domain; that stretch reads SSNSVLNNKV…YRMINSEVSE (83 aa).

It belongs to the NAD-dependent DNA ligase family. LigA subfamily. It depends on Mg(2+) as a cofactor. Mn(2+) serves as cofactor.

The catalysed reaction is NAD(+) + (deoxyribonucleotide)n-3'-hydroxyl + 5'-phospho-(deoxyribonucleotide)m = (deoxyribonucleotide)n+m + AMP + beta-nicotinamide D-nucleotide.. Its function is as follows. DNA ligase that catalyzes the formation of phosphodiester linkages between 5'-phosphoryl and 3'-hydroxyl groups in double-stranded DNA using NAD as a coenzyme and as the energy source for the reaction. It is essential for DNA replication and repair of damaged DNA. This Wolbachia sp. subsp. Brugia malayi (strain TRS) protein is DNA ligase.